The sequence spans 298 residues: Tyrosine recombinase XerC (298 aa).

In terms of domain architecture, Core-binding (CB) spans 2–88; it reads TDLHTDVERY…ALRSFFDWLV (87 aa). Positions 109-288 constitute a Tyr recombinase domain; it reads HLPKNIDVDD…DFQHLASVYD (180 aa). Catalysis depends on residues Arg148, Lys172, His240, Arg243, and His266. The active-site O-(3'-phospho-DNA)-tyrosine intermediate is the Tyr275.

Belongs to the 'phage' integrase family. XerC subfamily. In terms of assembly, forms a cyclic heterotetrameric complex composed of two molecules of XerC and two molecules of XerD, in which XerC interacts with XerD via its C-terminal region, XerD interacts with XerC via its C-terminal region and so on.

It localises to the cytoplasm. With respect to regulation, ftsK may regulate the catalytic switch between XerC and XerD in the heterotetrameric complex during the two steps of the recombination process. Site-specific tyrosine recombinase, which acts by catalyzing the cutting and rejoining of the recombining DNA molecules. Binds cooperatively to specific DNA consensus sequences that are separated from XerD binding sites by a short central region, forming the heterotetrameric XerC-XerD complex that recombines DNA substrates. The complex is essential to convert dimers of the bacterial chromosome into monomers to permit their segregation at cell division. It also contributes to the segregational stability of plasmids. In the complex XerC specifically exchanges the top DNA strands. This Escherichia coli O139:H28 (strain E24377A / ETEC) protein is Tyrosine recombinase XerC.